Consider the following 61-residue polypeptide: Large ribosomal subunit protein uL29 (61 aa).

This sequence belongs to the universal ribosomal protein uL29 family.

The sequence is that of Large ribosomal subunit protein uL29 from Nitratidesulfovibrio vulgaris (strain ATCC 29579 / DSM 644 / CCUG 34227 / NCIMB 8303 / VKM B-1760 / Hildenborough) (Desulfovibrio vulgaris).